The sequence spans 253 residues: Imidazole glycerol phosphate synthase subunit HisF (253 aa).

Residues aspartate 11 and aspartate 130 contribute to the active site.

This sequence belongs to the HisA/HisF family. Heterodimer of HisH and HisF.

Its subcellular location is the cytoplasm. The catalysed reaction is 5-[(5-phospho-1-deoxy-D-ribulos-1-ylimino)methylamino]-1-(5-phospho-beta-D-ribosyl)imidazole-4-carboxamide + L-glutamine = D-erythro-1-(imidazol-4-yl)glycerol 3-phosphate + 5-amino-1-(5-phospho-beta-D-ribosyl)imidazole-4-carboxamide + L-glutamate + H(+). It participates in amino-acid biosynthesis; L-histidine biosynthesis; L-histidine from 5-phospho-alpha-D-ribose 1-diphosphate: step 5/9. IGPS catalyzes the conversion of PRFAR and glutamine to IGP, AICAR and glutamate. The HisF subunit catalyzes the cyclization activity that produces IGP and AICAR from PRFAR using the ammonia provided by the HisH subunit. The polypeptide is Imidazole glycerol phosphate synthase subunit HisF (Caldanaerobacter subterraneus subsp. tengcongensis (strain DSM 15242 / JCM 11007 / NBRC 100824 / MB4) (Thermoanaerobacter tengcongensis)).